A 236-amino-acid polypeptide reads, in one-letter code: Mediator of RNA polymerase II transcription subunit 20 (236 aa).

This sequence belongs to the Mediator complex subunit 20 family. In terms of assembly, component of the Mediator complex.

Its subcellular location is the nucleus. Component of the Mediator complex, a coactivator involved in the regulated transcription of nearly all RNA polymerase II-dependent genes. Mediator functions as a bridge to convey information from gene-specific regulatory proteins to the basal RNA polymerase II transcription machinery. Mediator is recruited to promoters by direct interactions with regulatory proteins and serves as a scaffold for the assembly of a functional preinitiation complex with RNA polymerase II and the general transcription factors. The chain is Mediator of RNA polymerase II transcription subunit 20 (SRB2) from Debaryomyces hansenii (strain ATCC 36239 / CBS 767 / BCRC 21394 / JCM 1990 / NBRC 0083 / IGC 2968) (Yeast).